A 760-amino-acid polypeptide reads, in one-letter code: MEHTYQYLWIISFVTLPVPMLIGMGLLLFPVSTKKLHRIWAFPSVLLLSIVMVFSTDLFIQQINSSSIYQYVWSWTINNDFSLEFGHLIDPLTSILLILITTVGILVLVYSDSYMSHDQGYLRFFVYMSFFNTSMLGLVTSSNLIQIYIFWELVGMCSYLLIGFWFTRPIVSNACQKAFVTNRVGDFGLLLGILGLYWITGSFEFQDLFEIFNNLIYNNDNEVHFLFVTLCAFLLFSGAIAKSAQFPLHVWLPDAMEGPTPISALIHAATMVAAGIFLVARLLPLFVVIPYIMKLIALIGIITVLLGATLAFAQKDIKRGLAYSTMSQLGYTMLALGMGSYRAALFHLITHAYSKALLFLGSGSIIHSMEGIVGYSPDKSQNMVLMGGLTKHVPITKIAFLLGTLSLCGIPPLACFWSKDEILNDSWSYSPIFAIIAFSTAGLTAFYMFRVYLLTFEGHLNIYFQNYSGKKNSAFYSISLWGKQGSKILKKKMRLLPLLTINNKNNNERASFFCFFWKKIYQTGGTVRKMTCPFITINHFGTKRIFSYPQESDNTILFPMLVLVLFTLFIGAIGIPFNQFNKEEMNLDILSKLLIPSLSLLHQNQNESVDWYEFVTNSTFSVSIASFGIFIASSLYKPIYSSLQNLKFLNLVAKKGPKRILWDKIINVIYDWSYNRGYIDVFYTISLTEGIRRLAELTSFFDRRVIDGITNGVGFTSFFAGEGIKYVGGGRISFYLLLYLFYVLIFLLISSSIFSSFSSL.

Helical transmembrane passes span 9–29 (WIISFVTLPVPMLIGMGLLLF), 39–59 (IWAFPSVLLLSIVMVFSTDLF), 89–109 (IDPLTSILLILITTVGILVLV), 125–145 (FVYMSFFNTSMLGLVTSSNLI), 147–167 (IYIFWELVGMCSYLLIGFWFT), 185–205 (GDFGLLLGILGLYWITGSFEF), 221–241 (NEVHFLFVTLCAFLLFSGAIA), 260–280 (TPISALIHAATMVAAGIFLVA), 282–302 (LLPLFVVIPYIMKLIALIGII), 329–349 (LGYTMLALGMGSYRAALFHLI), 356–376 (ALLFLGSGSIIHSMEGIVGYS), 398–418 (IAFLLGTLSLCGIPPLACFWS), 429–449 (YSPIFAIIAFSTAGLTAFYMF), 556–576 (ILFPMLVLVLFTLFIGAIGIP), 620–640 (FSVSIASFGIFIASSLYKPIY), and 734–754 (FYLLLYLFYVLIFLLISSSIF).

This sequence belongs to the complex I subunit 5 family. As to quaternary structure, NDH is composed of at least 16 different subunits, 5 of which are encoded in the nucleus.

The protein localises to the plastid. It localises to the chloroplast thylakoid membrane. The enzyme catalyses a plastoquinone + NADH + (n+1) H(+)(in) = a plastoquinol + NAD(+) + n H(+)(out). It catalyses the reaction a plastoquinone + NADPH + (n+1) H(+)(in) = a plastoquinol + NADP(+) + n H(+)(out). NDH shuttles electrons from NAD(P)H:plastoquinone, via FMN and iron-sulfur (Fe-S) centers, to quinones in the photosynthetic chain and possibly in a chloroplast respiratory chain. The immediate electron acceptor for the enzyme in this species is believed to be plastoquinone. Couples the redox reaction to proton translocation, and thus conserves the redox energy in a proton gradient. The chain is NAD(P)H-quinone oxidoreductase subunit 5, chloroplastic (ndhF) from Populus alba (White poplar).